Reading from the N-terminus, the 155-residue chain is 6,7-dimethyl-8-ribityllumazine synthase (155 aa).

Residues Phe22, 56 to 58 (AFE), and 80 to 82 (AVI) each bind 5-amino-6-(D-ribitylamino)uracil. 85-86 (NT) is a binding site for (2S)-2-hydroxy-3-oxobutyl phosphate. The Proton donor role is filled by His88. Phe113 contacts 5-amino-6-(D-ribitylamino)uracil. Arg127 is a (2S)-2-hydroxy-3-oxobutyl phosphate binding site.

This sequence belongs to the DMRL synthase family.

It catalyses the reaction (2S)-2-hydroxy-3-oxobutyl phosphate + 5-amino-6-(D-ribitylamino)uracil = 6,7-dimethyl-8-(1-D-ribityl)lumazine + phosphate + 2 H2O + H(+). The protein operates within cofactor biosynthesis; riboflavin biosynthesis; riboflavin from 2-hydroxy-3-oxobutyl phosphate and 5-amino-6-(D-ribitylamino)uracil: step 1/2. Its function is as follows. Catalyzes the formation of 6,7-dimethyl-8-ribityllumazine by condensation of 5-amino-6-(D-ribitylamino)uracil with 3,4-dihydroxy-2-butanone 4-phosphate. This is the penultimate step in the biosynthesis of riboflavin. This is 6,7-dimethyl-8-ribityllumazine synthase from Streptococcus pneumoniae serotype 2 (strain D39 / NCTC 7466).